The primary structure comprises 450 residues: Gastrin/cholecystokinin type B receptor (450 aa).

Residues 1–57 (MELLKLNSSVQGPGPGSGSSLCHPGVSLLNSSSAGNLSCEPPRIRGTGTRELELAIR) lie on the Extracellular side of the membrane. 3 N-linked (GlcNAc...) asparagine glycosylation sites follow: Asn-7, Asn-30, and Asn-36. Residues 58–79 (ITLYAVIFLMSIGGNMLIIVVL) traverse the membrane as a helical segment. The Cytoplasmic portion of the chain corresponds to 80–87 (GLSRRLRT). Residues 88 to 109 (VTNAFLLSLAVSDLLLAVACMP) traverse the membrane as a helical segment. Residues 110–131 (FTLLPNLMGTFIFGTVICKAVS) are Extracellular-facing. Cys-127 and Cys-205 are joined by a disulfide. Residues 132 to 150 (YLMGVSVSVSTLNLVAIAL) form a helical membrane-spanning segment. Topologically, residues 151-170 (ERYSAICRPLQARVWQTRSH) are cytoplasmic. The helical transmembrane segment at 171–189 (AARVILATWLLSGLLMVPY) threads the bilayer. Residues 190–219 (PVYTVVQPVGPRVLQCMHRWPSARVRQTWS) are Extracellular-facing. A helical transmembrane segment spans residues 220–242 (VLLLMLLFFIPGVVMAVAYGLIS). Residues 243–336 (RELYLGLRFD…KLLAKKRVVR (94 aa)) are Cytoplasmic-facing. The disordered stretch occupies residues 258 to 277 (DTQSRVRNQGGLPGGTAPGP). The chain crosses the membrane as a helical span at residues 337–358 (MLLVIVLLFFLCWLPIYSANTW). The Extracellular portion of the chain corresponds to 359 to 376 (CAFDGPGAHRALSGAPIS). The helical transmembrane segment at 377 to 397 (FIHLLSYASACVNPLVYCFMH) threads the bilayer. The Cytoplasmic portion of the chain corresponds to 398–450 (RRFRQACLDTCARCCPRPPRARPRPLPDEDPPTPSIASLSRLSYTTISTLGPG). Cys-411 carries S-palmitoyl cysteine lipidation.

The protein belongs to the G-protein coupled receptor 1 family. In terms of tissue distribution, stomach and brain.

It localises to the cell membrane. Functionally, receptor for gastrin and cholecystokinin. The CCK-B receptors occur throughout the central nervous system where they modulate anxiety, analgesia, arousal, and neuroleptic activity. This receptor mediates its action by association with G proteins that activate a phosphatidylinositol-calcium second messenger system. The chain is Gastrin/cholecystokinin type B receptor (CCKBR) from Mastomys natalensis (African soft-furred rat).